A 397-amino-acid chain; its full sequence is Phosphoglycerate kinase (397 aa).

Residues 21–23, Arg-36, 59–62, Arg-114, and Arg-147 each bind substrate; these read DMN and HLGR. ATP contacts are provided by residues Lys-198, Glu-320, and 346–349; that span reads GGDT.

The protein belongs to the phosphoglycerate kinase family. Monomer.

It is found in the cytoplasm. The enzyme catalyses (2R)-3-phosphoglycerate + ATP = (2R)-3-phospho-glyceroyl phosphate + ADP. The protein operates within carbohydrate degradation; glycolysis; pyruvate from D-glyceraldehyde 3-phosphate: step 2/5. In Neisseria gonorrhoeae (strain NCCP11945), this protein is Phosphoglycerate kinase.